A 371-amino-acid polypeptide reads, in one-letter code: 4-hydroxyphenylpyruvate dioxygenase-like protein (371 aa).

VOC domains follow at residues 7–135 and 160–328; these read RLCH…LLER and RVDH…VFTK. Fe cation-binding residues include His-163, His-258, and Glu-339.

Belongs to the 4HPPD family. Requires Fe cation as cofactor.

The protein resides in the mitochondrion. The enzyme catalyses 3-(4-hydroxyphenyl)pyruvate + O2 = (S)-4-hydroxymandelate + CO2. Functionally, iron-dependent dioxygenase that catalyzes the conversion of 4-hydroxyphenylpyruvate (4-HPPA) to 4-hydroxymandelate (4-HMA) in the mitochondria, one of the steps in the biosynthesis of coenzyme Q10 from tyrosine. This is 4-hydroxyphenylpyruvate dioxygenase-like protein from Homo sapiens (Human).